Consider the following 237-residue polypeptide: Phosphoribosylaminoimidazole-succinocarboxamide synthase (237 aa).

This sequence belongs to the SAICAR synthetase family.

The catalysed reaction is 5-amino-1-(5-phospho-D-ribosyl)imidazole-4-carboxylate + L-aspartate + ATP = (2S)-2-[5-amino-1-(5-phospho-beta-D-ribosyl)imidazole-4-carboxamido]succinate + ADP + phosphate + 2 H(+). The protein operates within purine metabolism; IMP biosynthesis via de novo pathway; 5-amino-1-(5-phospho-D-ribosyl)imidazole-4-carboxamide from 5-amino-1-(5-phospho-D-ribosyl)imidazole-4-carboxylate: step 1/2. The chain is Phosphoribosylaminoimidazole-succinocarboxamide synthase from Deinococcus deserti (strain DSM 17065 / CIP 109153 / LMG 22923 / VCD115).